The sequence spans 635 residues: Glycosyltransferase-like protein gnt13 (635 aa).

Residues 1-18 (MNINTLIINFNKVKRMKN) lie on the Cytoplasmic side of the membrane. A helical; Signal-anchor for type II membrane protein membrane pass occupies residues 19-38 (FLILTLLVVMVVVFLQGPTL). Residues 39 to 635 (MINNSGQGMG…PNECFSDHHW (597 aa)) are Extracellular-facing. Residues Asn41 and Asn179 are each glycosylated (N-linked (GlcNAc...) asparagine). Disordered stretches follow at residues 300 to 358 (NINN…NNID) and 389 to 458 (NIDN…NNEP). Positions 389 to 456 (NIDNNNSNYN…NNNNNNNNNN (68 aa)) are enriched in low complexity. N-linked (GlcNAc...) asparagine glycosylation is found at Asn393 and Asn535.

Belongs to the glycosyltransferase 8 family. Highly divergent.

The protein localises to the membrane. This is Glycosyltransferase-like protein gnt13 (gnt13) from Dictyostelium discoideum (Social amoeba).